The primary structure comprises 238 residues: Group 3 late-embryogenesis abundant protein, mitochondrial (238 aa).

Positions 41–62 (SSGSGRPADNWAESQKEKAKAG) are disordered. Residues 50–202 (NWAESQKEKA…AGDLKDKAQQ (153 aa)) adopt a coiled-coil conformation. LEA 11-mer repeat repeat units lie at residues 64-74 (KDAQAEVGKVA), 89-99 (KDAVKQGANDL), 140-150 (KEAAENAWEKT), 151-161 (KDVAENLKDKV), 179-189 (KDRAQDAASEV), and 190-200 (KHKAGDLKDKA). 2 stretches are compositionally biased toward basic and acidic residues: residues 182–200 (AQDAASEVKHKAGDLKDKA) and 213–225 (DNRKQDQQQRRDS). Residues 182–238 (AQDAASEVKHKAGDLKDKAQQVIHDATTQSGDNRKQDQQQRRDSQGSQSGQNSRSRN) form a disordered region. Low complexity predominate over residues 226 to 238 (QGSQSGQNSRSRN).

It belongs to the LEA type 4 family.

Its subcellular location is the mitochondrion. Functionally, mitochondrial heat soluble protein acting as a molecular shield in water-deficient condition. In Hypsibius exemplaris (Freshwater tardigrade), this protein is Group 3 late-embryogenesis abundant protein, mitochondrial.